The following is a 233-amino-acid chain: MSNMVEVPIFIAILSFIVMCIGELLAYYSVSLKYKYEFEAISFGFIFGVATLILIPKSYSNMFVLYVILGMITVYLIEKYLAYCPLSKKYCVECDNLEENRIKFIYPISFFIHTFIDGLIIAVSYISEIGLPLYLAILMHKLPAGFVLISPLKGVYKNPLYPGVFVSFGTVLGTIVGLVTLKDVSTKILLAFSGGVFLGAFLMLAPHIYEHKEEKTFLYILLGYILVGIIALH.

Helical transmembrane passes span 7–27 (VPIF…LLAY), 36–56 (YEFE…ILIP), 62–82 (MFVL…KYLA), 119–139 (LIIA…AILM), 159–179 (PLYP…VGLV), and 188–208 (ILLA…APHI).

It is found in the cell membrane. This is an uncharacterized protein from Methanocaldococcus jannaschii (strain ATCC 43067 / DSM 2661 / JAL-1 / JCM 10045 / NBRC 100440) (Methanococcus jannaschii).